We begin with the raw amino-acid sequence, 345 residues long: Low-density lipoprotein receptor class A domain-containing protein 3 (345 aa).

A signal peptide spans 1–17 (MWLLGPLCLLLSSAAES). The Extracellular portion of the chain corresponds to 18–173 (QLLPGNNFTN…NQLVYYPSIT (156 aa)). The N-linked (GlcNAc...) asparagine glycan is linked to N24. 3 consecutive LDL-receptor class A domains span residues 28–65 (ECNI…KECP), 70–107 (KCGP…ENCT), and 112–148 (LCST…ESCE). 9 disulfide bridges follow: C29-C42, C37-C55, C49-C64, C71-C84, C78-C97, C91-C106, C113-C125, C120-C138, and C132-C147. The tract at residues 30 to 57 (NIPGNFMCSNGRCIPGAWQCDGLPDCFD) is (Microbial infection) Interaction with Venezuelan equine encephalitis virus/VEEV spike proteins E1 and E2. A helical membrane pass occupies residues 174-194 (YAIIGSSVIFVLVVALLALVL). Residues 195–345 (HHQRKRNNLM…SEPSQGTEEV (151 aa)) lie on the Cytoplasmic side of the membrane. Short sequence motifs (involved in ITCH interaction) lie at residues 256 to 259 (PPSY) and 275 to 278 (PPPY). Residues 270-345 (WYDLPPPPYS…SEPSQGTEEV (76 aa)) are disordered. Residues 295–313 (SRSGSANSASSQAASSLLS) show a composition bias toward low complexity.

It belongs to the LDLR family. In terms of assembly, interacts with APP precursor C-terminus. Interacts directly with ITCH; this interaction promotes ITCH auto-ubiquitination leading to its degradation. Interacts directly with NEDD4; this interaction promotes NEDD4 auto-ubiquitination. Interacts directly with NEDD4L. (Microbial infection) Interacts (via domain LDL-receptor class A 1) with Venezuelan equine encephalitis virus/VEEV spike proteins E1 and E2. In terms of tissue distribution, expressed at high levels in brain, lung, skeletal muscle, and pancreas. Expressed at moderate levels in heart, placenta, and kidney but not detected in the liver.

The protein resides in the cell membrane. May influence APP processing, resulting in a decrease in sAPP-alpha production and increased amyloidogenic P3 peptide production. May regulate ITCH and NEDD4 E3 ligase activity and degradation. In terms of biological role, (Microbial infection) Acts as a receptor for Venezuelan equine encephalitis virus. The sequence is that of Low-density lipoprotein receptor class A domain-containing protein 3 from Homo sapiens (Human).